The sequence spans 70 residues: MAKCQVCGKGPVTGKNVSHSNRRTNRWFKPNLQKVRVITDEGKIKRMWVCTDCLSAGKVKRYVSTKVEAQ.

It belongs to the bacterial ribosomal protein bL28 family.

This chain is Large ribosomal subunit protein bL28, found in Thermosipho melanesiensis (strain DSM 12029 / CIP 104789 / BI429).